Here is a 598-residue protein sequence, read N- to C-terminus: Aspartate--tRNA(Asp/Asn) ligase (598 aa).

Glutamate 174 is a binding site for L-aspartate. The segment at glutamine 198–lysine 201 is aspartate. Arginine 220 lines the L-aspartate pocket. Residues arginine 220–glutamate 222 and glutamine 229 each bind ATP. Histidine 458 provides a ligand contact to L-aspartate. Residue glutamate 492 participates in ATP binding. Residue arginine 499 coordinates L-aspartate. Glycine 544–arginine 547 lines the ATP pocket.

Belongs to the class-II aminoacyl-tRNA synthetase family. Type 1 subfamily. In terms of assembly, homodimer.

The protein resides in the cytoplasm. It catalyses the reaction tRNA(Asx) + L-aspartate + ATP = L-aspartyl-tRNA(Asx) + AMP + diphosphate. In terms of biological role, aspartyl-tRNA synthetase with relaxed tRNA specificity since it is able to aspartylate not only its cognate tRNA(Asp) but also tRNA(Asn). Reaction proceeds in two steps: L-aspartate is first activated by ATP to form Asp-AMP and then transferred to the acceptor end of tRNA(Asp/Asn). The chain is Aspartate--tRNA(Asp/Asn) ligase from Dehalococcoides mccartyi (strain ATCC BAA-2100 / JCM 16839 / KCTC 5957 / BAV1).